The sequence spans 943 residues: Isoleucine--tRNA ligase (943 aa).

The short motif at 58-68 (PYANGNIHIGH) is the 'HIGH' region element. Position 567 (E567) interacts with L-isoleucyl-5'-AMP. A 'KMSKS' region motif is present at residues 608 to 612 (KMSKS). K611 contributes to the ATP binding site. C906, C909, C926, and C929 together coordinate Zn(2+).

The protein belongs to the class-I aminoacyl-tRNA synthetase family. IleS type 1 subfamily. In terms of assembly, monomer. Requires Zn(2+) as cofactor.

The protein resides in the cytoplasm. It carries out the reaction tRNA(Ile) + L-isoleucine + ATP = L-isoleucyl-tRNA(Ile) + AMP + diphosphate. Its function is as follows. Catalyzes the attachment of isoleucine to tRNA(Ile). As IleRS can inadvertently accommodate and process structurally similar amino acids such as valine, to avoid such errors it has two additional distinct tRNA(Ile)-dependent editing activities. One activity is designated as 'pretransfer' editing and involves the hydrolysis of activated Val-AMP. The other activity is designated 'posttransfer' editing and involves deacylation of mischarged Val-tRNA(Ile). In Stutzerimonas stutzeri (strain A1501) (Pseudomonas stutzeri), this protein is Isoleucine--tRNA ligase.